The primary structure comprises 252 residues: tRNA1(Val) (adenine(37)-N6)-methyltransferase (252 aa).

It belongs to the methyltransferase superfamily. tRNA (adenine-N(6)-)-methyltransferase family.

The protein localises to the cytoplasm. The enzyme catalyses adenosine(37) in tRNA1(Val) + S-adenosyl-L-methionine = N(6)-methyladenosine(37) in tRNA1(Val) + S-adenosyl-L-homocysteine + H(+). Specifically methylates the adenine in position 37 of tRNA(1)(Val) (anticodon cmo5UAC). This is tRNA1(Val) (adenine(37)-N6)-methyltransferase from Yersinia pseudotuberculosis serotype IB (strain PB1/+).